Consider the following 363-residue polypeptide: NAD(P)H-quinone oxidoreductase subunit 1, chloroplastic (363 aa).

A run of 7 helical transmembrane segments spans residues 28–48 (WVLAPISIYVLAITIGVLVIV), 98–118 (FSIGPSIAVIAILLSYSVIPF), 129–149 (IGIFLWIAISSIAPIGLLMSG), 253–273 (FGLFYVASYLNLLVSSLFVTV), 274–294 (LYLGGSNLSIPYIFVPGLVEI), 300–320 (IFGTTIGIFITLAKTYLFLFI), and 336–356 (LLNLGWKFLLPISLGNLLLTT).

This sequence belongs to the complex I subunit 1 family. As to quaternary structure, NDH is composed of at least 16 different subunits, 5 of which are encoded in the nucleus.

The protein resides in the plastid. Its subcellular location is the chloroplast thylakoid membrane. The catalysed reaction is a plastoquinone + NADH + (n+1) H(+)(in) = a plastoquinol + NAD(+) + n H(+)(out). It carries out the reaction a plastoquinone + NADPH + (n+1) H(+)(in) = a plastoquinol + NADP(+) + n H(+)(out). In terms of biological role, NDH shuttles electrons from NAD(P)H:plastoquinone, via FMN and iron-sulfur (Fe-S) centers, to quinones in the photosynthetic chain and possibly in a chloroplast respiratory chain. The immediate electron acceptor for the enzyme in this species is believed to be plastoquinone. Couples the redox reaction to proton translocation, and thus conserves the redox energy in a proton gradient. The chain is NAD(P)H-quinone oxidoreductase subunit 1, chloroplastic from Citrus sinensis (Sweet orange).